Here is a 375-residue protein sequence, read N- to C-terminus: Chaperone protein DnaJ (375 aa).

One can recognise a J domain in the interval D5–G70. The CR-type zinc-finger motif lies at G134–H212. The Zn(2+) site is built by C147, C150, C164, C167, C186, C189, C200, and C203. CXXCXGXG motif repeat units lie at residues C147–G154, C164–G171, C186–G193, and C200–G207.

It belongs to the DnaJ family. As to quaternary structure, homodimer. It depends on Zn(2+) as a cofactor.

The protein localises to the cytoplasm. In terms of biological role, participates actively in the response to hyperosmotic and heat shock by preventing the aggregation of stress-denatured proteins and by disaggregating proteins, also in an autonomous, DnaK-independent fashion. Unfolded proteins bind initially to DnaJ; upon interaction with the DnaJ-bound protein, DnaK hydrolyzes its bound ATP, resulting in the formation of a stable complex. GrpE releases ADP from DnaK; ATP binding to DnaK triggers the release of the substrate protein, thus completing the reaction cycle. Several rounds of ATP-dependent interactions between DnaJ, DnaK and GrpE are required for fully efficient folding. Also involved, together with DnaK and GrpE, in the DNA replication of plasmids through activation of initiation proteins. The sequence is that of Chaperone protein DnaJ from Azotobacter vinelandii (strain DJ / ATCC BAA-1303).